Reading from the N-terminus, the 1187-residue chain is Trafficking protein particle complex II-specific subunit 120 homolog (1187 aa).

Positions 1037–1059 (GTTAKTDSSKEPGDGSSRSADES) are disordered.

The protein belongs to the TRS120 family. Part of the multisubunit TRAPP (transport protein particle) II complex composed of BET3, BET5, TRS20, TRS23, TRS31, TRS33, TRS65, TRS85, TRS120 and TRS130.

It is found in the golgi apparatus. The protein localises to the trans-Golgi network. The protein resides in the early endosome. Specific subunit of the TRAPP II complex, a highly conserved vesicle tethering complex that is required for the proper transport of proteins in post-Golgi trafficking pathways to the growing cell plate in mitotic active cells. The protein is Trafficking protein particle complex II-specific subunit 120 homolog of Oryza sativa subsp. japonica (Rice).